The sequence spans 345 residues: 3-isopropylmalate dehydrogenase (345 aa).

74-87 serves as a coordination point for NAD(+); it reads GPKWDGLPRKISPE. Residues R94, R104, R132, and D217 each contribute to the substrate site. 3 residues coordinate Mg(2+): D217, D241, and D245. 274-286 lines the NAD(+) pocket; it reads GSAPDIAGKGIAN.

The protein belongs to the isocitrate and isopropylmalate dehydrogenases family. LeuB type 1 subfamily. In terms of assembly, homodimer. The cofactor is Mg(2+). It depends on Mn(2+) as a cofactor.

The protein resides in the cytoplasm. The catalysed reaction is (2R,3S)-3-isopropylmalate + NAD(+) = 4-methyl-2-oxopentanoate + CO2 + NADH. It participates in amino-acid biosynthesis; L-leucine biosynthesis; L-leucine from 3-methyl-2-oxobutanoate: step 3/4. Catalyzes the oxidation of 3-carboxy-2-hydroxy-4-methylpentanoate (3-isopropylmalate) to 3-carboxy-4-methyl-2-oxopentanoate. The product decarboxylates to 4-methyl-2 oxopentanoate. In Thermus thermophilus, this protein is 3-isopropylmalate dehydrogenase (leuB).